The following is a 381-amino-acid chain: Putative MgpC-like protein MPN_503 (381 aa).

Residues 1 to 109 (MNGVAQDKVH…TDSQQSGHNS (109 aa)) form a disordered region. Residues 13-31 (EQTTQWNQQASQKNLTNNP) are compositionally biased toward polar residues. Composition is skewed to basic and acidic residues over residues 40-51 (KLDKGRAYRKLN) and 61-73 (DSTK…DKDG). The span at 89-109 (VSSTESQMAAVTDSQQSGHNS) shows a compositional bias: polar residues.

This sequence belongs to the MgpC family.

The protein is Putative MgpC-like protein MPN_503 of Mycoplasma pneumoniae (strain ATCC 29342 / M129 / Subtype 1) (Mycoplasmoides pneumoniae).